A 1196-amino-acid chain; its full sequence is Nucleolar protein 6 (1196 aa).

Disordered stretches follow at residues 1–75 (MPGK…VKPP) and 1140–1196 (KREQ…KALK). Residues 22–31 (HAEDHSDLEH) show a composition bias toward basic and acidic residues. A compositionally biased stretch (basic residues) spans 1165–1174 (KPKKHRKRKG).

Belongs to the NRAP family. As to quaternary structure, part of the small subunit (SSU) processome, composed of more than 70 proteins and the RNA chaperone small nucleolar RNA (snoRNA) U3.

The protein localises to the nucleus. The protein resides in the nucleolus. Its subcellular location is the chromosome. Its function is as follows. Part of the small subunit (SSU) processome, first precursor of the small eukaryotic ribosomal subunit. During the assembly of the SSU processome in the nucleolus, many ribosome biogenesis factors, an RNA chaperone and ribosomal proteins associate with the nascent pre-rRNA and work in concert to generate RNA folding, modifications, rearrangements and cleavage as well as targeted degradation of pre-ribosomal RNA by the RNA exosome. This chain is Nucleolar protein 6, found in Drosophila sechellia (Fruit fly).